Consider the following 152-residue polypeptide: UPF0225 protein YchJ (152 aa).

The protein belongs to the UPF0225 family.

The sequence is that of UPF0225 protein YchJ (ychJ) from Salmonella typhimurium (strain LT2 / SGSC1412 / ATCC 700720).